The sequence spans 396 residues: Cystathionine beta-lyase (396 aa).

An N6-(pyridoxal phosphate)lysine modification is found at lysine 214.

It belongs to the trans-sulfuration enzymes family. As to quaternary structure, homodimer. Requires pyridoxal 5'-phosphate as cofactor.

The protein resides in the cytoplasm. The catalysed reaction is L,L-cystathionine + H2O = L-homocysteine + pyruvate + NH4(+). The enzyme catalyses an S-substituted L-cysteine + H2O = a thiol + pyruvate + NH4(+). The protein operates within amino-acid biosynthesis; L-methionine biosynthesis via de novo pathway; L-homocysteine from L-cystathionine: step 1/1. Catalyzes the cleavage of cystathionine to homocysteine, pyruvate and ammonia during methionine biosynthesis. Also has cytotoxic activity toward osteogenic, osteosarcoma and tracheal cells, in vitro. The chemical basis for cell toxicity might be the formation and subsequent transfer of sulfane-sulfur to proteins, derived via beta-cystathionase cleavage of L-cystine. This Bordetella avium protein is Cystathionine beta-lyase (metC).